Consider the following 217-residue polypeptide: Ribosome maturation factor RimM (217 aa).

The region spanning 115 to 186 is the PRC barrel domain; sequence EDAWYDNQLV…TVTLTPPPGL (72 aa). The tract at residues 181–217 is disordered; the sequence is TPPPGLFEDLPDDAPAAGDESEPVSPPVTAEETPGGE.

Belongs to the RimM family. In terms of assembly, binds ribosomal protein uS19.

It is found in the cytoplasm. In terms of biological role, an accessory protein needed during the final step in the assembly of 30S ribosomal subunit, possibly for assembly of the head region. Essential for efficient processing of 16S rRNA. May be needed both before and after RbfA during the maturation of 16S rRNA. It has affinity for free ribosomal 30S subunits but not for 70S ribosomes. The protein is Ribosome maturation factor RimM of Leifsonia xyli subsp. xyli (strain CTCB07).